We begin with the raw amino-acid sequence, 313 residues long: Porphobilinogen deaminase (313 aa).

Position 242 is an S-(dipyrrolylmethanemethyl)cysteine (cysteine 242).

This sequence belongs to the HMBS family. Monomer. The cofactor is dipyrromethane.

It catalyses the reaction 4 porphobilinogen + H2O = hydroxymethylbilane + 4 NH4(+). It functions in the pathway porphyrin-containing compound metabolism; protoporphyrin-IX biosynthesis; coproporphyrinogen-III from 5-aminolevulinate: step 2/4. Functionally, tetrapolymerization of the monopyrrole PBG into the hydroxymethylbilane pre-uroporphyrinogen in several discrete steps. This chain is Porphobilinogen deaminase, found in Pseudomonas fluorescens (strain ATCC BAA-477 / NRRL B-23932 / Pf-5).